Consider the following 595-residue polypeptide: Mitoguardin 1 (595 aa).

A run of 2 helical transmembrane segments spans residues Leu11 to Leu31 and Thr38 to Ala58.

It belongs to the mitoguardin family. Homodimer and heterodimer; forms heterodimers with miga2.

Its subcellular location is the mitochondrion outer membrane. In terms of biological role, regulator of mitochondrial fusion: acts by forming homo- and heterodimers at the mitochondrial outer membrane and facilitating the formation of pld6/MitoPLD dimers. May act by regulating phospholipid metabolism via pld6/MitoPLD. The protein is Mitoguardin 1 of Danio rerio (Zebrafish).